We begin with the raw amino-acid sequence, 305 residues long: MAGTILEPGQIEAAASKPPFTNLPPRDLFALRSARLAKLAEDHPLADYLRLLAGVCQAQQQVLDNPPASAPLDPARTRECFKHAMPPLAADTLVREGAWLPLLDAWLDAFAVPDNLSVIAAVDQLRRADSGQRKAWAVALVSGQYDSLPPALVPFLGAALQLAWTHWLLQLDLSDLREREDQTLCPCCGAPPMAGVIRHRGQLNGLRYLVCSLCACEWHYVRLKCSHCRSTKKLDYLHFEGSPQGIKAEACPECNGYLKQLYLELAPDGESLSADLATLDLDLLLADQGYNRQAPNLLLAPGHEA.

Belongs to the FdhE family.

The protein localises to the cytoplasm. Functionally, necessary for formate dehydrogenase activity. The chain is Protein FdhE homolog from Stutzerimonas stutzeri (strain A1501) (Pseudomonas stutzeri).